The primary structure comprises 174 residues: B3 domain-containing protein At2g31862 (174 aa).

A DNA-binding region (TF-B3) is located at residues 1–71 (MWVNLSCMCH…KLYIALVPLD (71 aa)).

The protein resides in the nucleus. In Arabidopsis thaliana (Mouse-ear cress), this protein is B3 domain-containing protein At2g31862.